A 212-amino-acid chain; its full sequence is Orotate phosphoribosyltransferase (212 aa).

Lys-26 lines the 5-phospho-alpha-D-ribose 1-diphosphate pocket. An orotate-binding site is contributed by 34–35 (FF). 5-phospho-alpha-D-ribose 1-diphosphate-binding positions include 72–73 (YK), Arg-99, Lys-100, Lys-103, His-105, and 124–132 (DDVITVGTA). Orotate contacts are provided by Thr-128 and Arg-156.

This sequence belongs to the purine/pyrimidine phosphoribosyltransferase family. PyrE subfamily. As to quaternary structure, homodimer. It depends on Mg(2+) as a cofactor.

The enzyme catalyses orotidine 5'-phosphate + diphosphate = orotate + 5-phospho-alpha-D-ribose 1-diphosphate. The protein operates within pyrimidine metabolism; UMP biosynthesis via de novo pathway; UMP from orotate: step 1/2. Functionally, catalyzes the transfer of a ribosyl phosphate group from 5-phosphoribose 1-diphosphate to orotate, leading to the formation of orotidine monophosphate (OMP). This Ruthia magnifica subsp. Calyptogena magnifica protein is Orotate phosphoribosyltransferase.